Reading from the N-terminus, the 707-residue chain is ATP-dependent zinc metalloprotease FtsH (707 aa).

Topologically, residues Met1–Ser25 are cytoplasmic. A helical membrane pass occupies residues Ile26–Phe46. The Extracellular segment spans residues Leu47–Ala128. The helical transmembrane segment at Thr129 to Val149 threads the bilayer. The Cytoplasmic segment spans residues Thr150 to Lys707. Residue Gly246 to Thr253 coordinates ATP. His468 serves as a coordination point for Zn(2+). Glu469 is a catalytic residue. Positions 472 and 546 each coordinate Zn(2+).

This sequence in the central section; belongs to the AAA ATPase family. It in the C-terminal section; belongs to the peptidase M41 family. As to quaternary structure, homohexamer. Requires Zn(2+) as cofactor.

Its subcellular location is the cell membrane. Acts as a processive, ATP-dependent zinc metallopeptidase for both cytoplasmic and membrane proteins. Plays a role in the quality control of integral membrane proteins. This is ATP-dependent zinc metalloprotease FtsH from Mycoplasma mobile (strain ATCC 43663 / 163K / NCTC 11711) (Mesomycoplasma mobile).